A 184-amino-acid chain; its full sequence is GTP cyclohydrolase 1 (184 aa).

The Zn(2+) site is built by Cys75, His78, and Cys146.

This sequence belongs to the GTP cyclohydrolase I family. Toroid-shaped homodecamer, composed of two pentamers of five dimers.

The enzyme catalyses GTP + H2O = 7,8-dihydroneopterin 3'-triphosphate + formate + H(+). It functions in the pathway cofactor biosynthesis; 7,8-dihydroneopterin triphosphate biosynthesis; 7,8-dihydroneopterin triphosphate from GTP: step 1/1. The polypeptide is GTP cyclohydrolase 1 (Chromohalobacter salexigens (strain ATCC BAA-138 / DSM 3043 / CIP 106854 / NCIMB 13768 / 1H11)).